The sequence spans 431 residues: Enolase (431 aa).

Residue Gln167 coordinates (2R)-2-phosphoglycerate. Glu209 (proton donor) is an active-site residue. 3 residues coordinate Mg(2+): Asp246, Glu290, and Asp316. Residues Lys341, Arg370, Ser371, and Lys392 each coordinate (2R)-2-phosphoglycerate. The active-site Proton acceptor is Lys341.

Belongs to the enolase family. Component of the RNA degradosome, a multiprotein complex involved in RNA processing and mRNA degradation. Mg(2+) is required as a cofactor.

Its subcellular location is the cytoplasm. It is found in the secreted. The protein localises to the cell surface. The catalysed reaction is (2R)-2-phosphoglycerate = phosphoenolpyruvate + H2O. Its pathway is carbohydrate degradation; glycolysis; pyruvate from D-glyceraldehyde 3-phosphate: step 4/5. Catalyzes the reversible conversion of 2-phosphoglycerate (2-PG) into phosphoenolpyruvate (PEP). It is essential for the degradation of carbohydrates via glycolysis. In Shigella flexneri serotype 5b (strain 8401), this protein is Enolase.